The chain runs to 400 residues: Enoyl-[acyl-carrier-protein] reductase [NADH] (400 aa).

NAD(+) contacts are provided by residues 74–75 (FE), 111–112 (DA), and 139–140 (VA). Substrate is bound at residue Y225. Y235 (proton donor) is an active-site residue. NAD(+) is bound by residues K244 and 273-275 (VVT).

This sequence belongs to the TER reductase family. As to quaternary structure, monomer.

It carries out the reaction a 2,3-saturated acyl-[ACP] + NAD(+) = a (2E)-enoyl-[ACP] + NADH + H(+). It functions in the pathway lipid metabolism; fatty acid biosynthesis. In terms of biological role, involved in the final reduction of the elongation cycle of fatty acid synthesis (FAS II). Catalyzes the reduction of a carbon-carbon double bond in an enoyl moiety that is covalently linked to an acyl carrier protein (ACP). The protein is Enoyl-[acyl-carrier-protein] reductase [NADH] of Psychromonas ingrahamii (strain DSM 17664 / CCUG 51855 / 37).